Reading from the N-terminus, the 514-residue chain is Uronyl 2-sulfotransferase homolog pip (514 aa).

Residues 1 to 30 are Cytoplasmic-facing; the sequence is MSLNAERSYKMKLRDVENAFKYRRIPYPKR. A helical; Signal-anchor for type II membrane protein membrane pass occupies residues 31–50; it reads SVELIALLAISCTFFLFMHT. At 51–514 the chain is on the lumenal side; it reads NKLNSRLKEM…EQQNEYNEDY (464 aa). Residues 112 to 121 are compositionally biased toward basic and acidic residues; that stretch reads HDRRSSEEQL. The segment at 112 to 185 is disordered; the sequence is HDRRSSEEQL…DEDEVEENDD (74 aa). Positions 127–140 are enriched in basic residues; sequence HGHHHDHHSHHHHM. Residues 155–170 show a composition bias toward basic and acidic residues; the sequence is HDKQLAVPDNKHKEDE. A compositionally biased stretch (acidic residues) spans 171–185; sequence VHYEDDEDEVEENDD. The N-linked (GlcNAc...) asparagine glycan is linked to Asn207. His282 is a catalytic residue. Asn287, Asn416, Asn451, and Asn467 each carry an N-linked (GlcNAc...) asparagine glycan.

This sequence belongs to the sulfotransferase 3 family. As to quaternary structure, interacts with wbl/windbeutel; the interaction is direct and does not require pip to be folded. Ovary-specific. Specifically expressed in the ventral follicle cells of stage 9-10 egg chambers. In terms of tissue distribution, expressed in ovaries. Specifically expressed in the ventral follicle cells of stage 9-10 egg chambers.

It localises to the golgi apparatus membrane. In terms of biological role, sulfotransferase involved in dorsoventral axis patterning in early embryos. Required for the ventral activation of ea/easter by the protease snk in the perivitelline space between the embryonic membrane and the eggshell; activation of ea requires both activation of the ndl-gd-snk protease cascade and sulfation of a vitelline membrane component by pip. Probably acts by mediating the sulfation of some glycoprotein or glycosaminoglycan stably deposited in the vitelline membrane, whose ventrally localized modification leads to spatially restricted activation of the protease cascade resulting in localized activation of the spz Toll receptor ligand by ea. Its function is as follows. Probably required redundantly with isoform H for dorsoventral axis patterning in embryos. Lacks 2-O-sulfotransferase activity towards completely desulfated N-sulfated (CDSNS) heparin, chondroitin, and chondroitin sulfate A, B (dermatan sulfate), and C. Sulfates several components of the eggshell vitelline membrane, including Vml, Vm26Aa, Vm32E and psd/palisade/Fcp26Aa. Functionally, probably required redundantly with isoform A for dorsoventral axis patterning in embryos. Lacks 2-O-sulfotransferase activity towards CDSNS heparin, chondroitin, and chondroitin sulfate A, B (dermatan sulfate), and C. In Drosophila melanogaster (Fruit fly), this protein is Uronyl 2-sulfotransferase homolog pip.